The following is a 513-amino-acid chain: Protein PNS1 (513 aa).

Over residues 1-13 (MSNNNYPPPPNPP) the composition is skewed to pro residues. A disordered region spans residues 1–41 (MSNNNYPPPPNPPNYQGEEQVHNVQPDLENNQEKYYAEQPQ). Residues 1–60 (MSNNNYPPPPNPPNYQGEEQVHNVQPDLENNQEKYYAEQPQPSQQFEESFKIDKPKWNDW) are Cytoplasmic-facing. The helical transmembrane segment at 61–81 (PFTVFFLLTVAGFIAIAGITL) threads the bilayer. The Extracellular portion of the chain corresponds to 82–108 (NALKKTYGLQGSSIYNSTDTFTLNTNT). The N-linked (GlcNAc...) asparagine glycan is linked to Asn97. The helical transmembrane segment at 109 to 129 (IILFGFIIVVGVVLSVLIIVY) threads the bilayer. Residues 130 to 136 (ARMAPRV) are Cytoplasmic-facing. The chain crosses the membrane as a helical span at residues 137–157 (FITTGLILNIILGLGTCIYYF). The Extracellular portion of the chain corresponds to 158–163 (VAHYYS). A helical membrane pass occupies residues 164–182 (AAIVFLVFTLFTAWCYWSC). The Cytoplasmic segment spans residues 183-210 (RHRIPFSATVLEITIDVMKRYPSTLITS). A helical transmembrane segment spans residues 211-231 (FIGIIVSGLFSTLFSVVIVAT). At 232-251 (YVKYDPDSQGCDVAGGGCSQ) the chain is on the extracellular side. A helical transmembrane segment spans residues 252 to 272 (SKLIGVLVFVFFAGYYISEVI). The Cytoplasmic portion of the chain corresponds to 273 to 309 (KNVIHITIAGIYGTWYYLSNSDQGEPKHPALGAFKRA). A helical transmembrane segment spans residues 310–330 (MTYCFGSVCFGSLIVSIIQLI). The Extracellular segment spans residues 331–346 (RSFVQILKQNAFGSGD). Residues 347-367 (NCAGCGFLILDFVLGFIDWIV) traverse the membrane as a helical segment. Over 368 to 412 (RYFNHYAYCYVALYGKSYLKSARDTFDLIRFKGMDALINDCFINT) the chain is Cytoplasmic. The helical transmembrane segment at 413 to 433 (SLNLYSMFVGYVVALLAYFYL) threads the bilayer. The Extracellular segment spans residues 434-460 (KFTDPAYNSSGTFYAPVVAFSFLISGQ). Asn441 is a glycosylation site (N-linked (GlcNAc...) asparagine). A helical transmembrane segment spans residues 461 to 481 (ITRIALTVISSGISTFFVALA). Topologically, residues 482 to 513 (KDPEVFQMTNRDRFDEIFRNYPQVLQKITSDH) are cytoplasmic.

Belongs to the CTL (choline transporter-like) family.

Its subcellular location is the cell membrane. Its function is as follows. Probably involved in transport through the plasma membrane. In Debaryomyces hansenii (strain ATCC 36239 / CBS 767 / BCRC 21394 / JCM 1990 / NBRC 0083 / IGC 2968) (Yeast), this protein is Protein PNS1 (PNS1).